The sequence spans 210 residues: Putative 3-methyladenine DNA glycosylase (210 aa).

Belongs to the DNA glycosylase MPG family.

This is Putative 3-methyladenine DNA glycosylase from Lactobacillus helveticus (strain DPC 4571).